Here is a 330-residue protein sequence, read N- to C-terminus: Ribosome production factor 1 (330 aa).

Disordered regions lie at residues 1 to 32 and 53 to 83; these read MKAV…FPPT and EEKR…KEVP. Residues 55–70 are compositionally biased toward basic residues; sequence KRKKRMELKKKKKKER. The span at 71 to 83 shows a compositional bias: basic and acidic residues; that stretch reads KALDDKAPPKEVP. In terms of domain architecture, Brix spans 123–306; the sequence is PKVLITTSDR…LRSLQKGTFD (184 aa). The tract at residues 284-301 is RNA-binding; it reads VGIQELGPRFTLKLRSLQ.

It is found in the nucleus. It localises to the nucleolus. Its function is as follows. May be required for ribosome biogenesis. The sequence is that of Ribosome production factor 1 (rpf1) from Danio rerio (Zebrafish).